Consider the following 688-residue polypeptide: Pentatricopeptide repeat-containing protein At3g18020 (688 aa).

PPR repeat units follow at residues 53 to 88 (DRAY…GYRP), 89 to 123 (DSLN…GFIP), 124 to 158 (DERT…KKEF), 161 to 195 (SLTN…GHLP), 196 to 230 (DVVT…GIRP), 231 to 261 (NSLT…LWEY), 271 to 305 (KAAA…ESVN), 306 to 340 (VEFA…GLKP), 341 to 375 (RRTS…EFFP), 376 to 406 (SEYT…MLRK), 411 to 445 (RTRI…DCRP), 446 to 480 (DEYT…KFCA), 482 to 517 (DAVT…KIKP), 518 to 552 (GVVA…SVTA), 553 to 583 (DSTT…VIWP), 588 to 622 (DAFV…GAIP), and 623 to 657 (NVVC…GQAP).

It belongs to the PPR family. P subfamily.

This is Pentatricopeptide repeat-containing protein At3g18020 from Arabidopsis thaliana (Mouse-ear cress).